A 51-amino-acid polypeptide reads, in one-letter code: Large ribosomal subunit protein eL39 (51 aa).

It belongs to the eukaryotic ribosomal protein eL39 family.

The sequence is that of Large ribosomal subunit protein eL39 (rpl39e) from Thermoplasma acidophilum (strain ATCC 25905 / DSM 1728 / JCM 9062 / NBRC 15155 / AMRC-C165).